Here is a 202-residue protein sequence, read N- to C-terminus: Holliday junction branch migration complex subunit RuvA (202 aa).

The segment at 1 to 64 (MIGRLRGTLA…EDAQLLYGFA (64 aa)) is domain I. The tract at residues 65 to 143 (GKRERDFFRE…AWETSPAMFA (79 aa)) is domain II. A flexible linker region spans residues 144–154 (LVPNQPDGPAP). Positions 154 to 202 (PVNTAENDAVSALISLGYKPQEASKAISAIKEKGLSSEDMIRRALKGMI) are domain III.

Belongs to the RuvA family. In terms of assembly, homotetramer. Forms an RuvA(8)-RuvB(12)-Holliday junction (HJ) complex. HJ DNA is sandwiched between 2 RuvA tetramers; dsDNA enters through RuvA and exits via RuvB. An RuvB hexamer assembles on each DNA strand where it exits the tetramer. Each RuvB hexamer is contacted by two RuvA subunits (via domain III) on 2 adjacent RuvB subunits; this complex drives branch migration. In the full resolvosome a probable DNA-RuvA(4)-RuvB(12)-RuvC(2) complex forms which resolves the HJ.

The protein localises to the cytoplasm. Functionally, the RuvA-RuvB-RuvC complex processes Holliday junction (HJ) DNA during genetic recombination and DNA repair, while the RuvA-RuvB complex plays an important role in the rescue of blocked DNA replication forks via replication fork reversal (RFR). RuvA specifically binds to HJ cruciform DNA, conferring on it an open structure. The RuvB hexamer acts as an ATP-dependent pump, pulling dsDNA into and through the RuvAB complex. HJ branch migration allows RuvC to scan DNA until it finds its consensus sequence, where it cleaves and resolves the cruciform DNA. This is Holliday junction branch migration complex subunit RuvA from Pseudomonas fluorescens (strain Pf0-1).